Here is a 207-residue protein sequence, read N- to C-terminus: Large ribosomal subunit protein uL4 (207 aa).

The segment at 49 to 78 (HAVKNRSAVSGGGRKPWRQKGTGRARQGSI) is disordered.

Belongs to the universal ribosomal protein uL4 family. Part of the 50S ribosomal subunit.

One of the primary rRNA binding proteins, this protein initially binds near the 5'-end of the 23S rRNA. It is important during the early stages of 50S assembly. It makes multiple contacts with different domains of the 23S rRNA in the assembled 50S subunit and ribosome. In terms of biological role, forms part of the polypeptide exit tunnel. This chain is Large ribosomal subunit protein uL4, found in Streptococcus pneumoniae serotype 19F (strain G54).